A 414-amino-acid chain; its full sequence is 2,3-diketo-5-methylthiopentyl-1-phosphate enolase (414 aa).

The active-site Proton acceptor is the Lys99. Substrate is bound by residues Lys148, 174–177 (KDDE), His265, Gly338, and 360–361 (GG). The Mg(2+) site is built by Lys174, Asp176, and Glu177. The residue at position 174 (Lys174) is an N6-carboxylysine.

It belongs to the RuBisCO large chain family. Type IV subfamily. Homodimer. Requires Mg(2+) as cofactor.

It catalyses the reaction 5-methylsulfanyl-2,3-dioxopentyl phosphate = 2-hydroxy-5-methylsulfanyl-3-oxopent-1-enyl phosphate. The protein operates within amino-acid biosynthesis; L-methionine biosynthesis via salvage pathway; L-methionine from S-methyl-5-thio-alpha-D-ribose 1-phosphate: step 3/6. Functionally, catalyzes the enolization of 2,3-diketo-5-methylthiopentyl-1-phosphate (DK-MTP-1-P) into 2-hydroxy-3-keto-5-methylthiopentenyl-1-phosphate (HK-MTPenyl-1-P). The protein is 2,3-diketo-5-methylthiopentyl-1-phosphate enolase of Bacillus cereus (strain ATCC 14579 / DSM 31 / CCUG 7414 / JCM 2152 / NBRC 15305 / NCIMB 9373 / NCTC 2599 / NRRL B-3711).